A 932-amino-acid chain; its full sequence is Glycine dehydrogenase (decarboxylating) (932 aa).

Lys-685 carries the post-translational modification N6-(pyridoxal phosphate)lysine.

This sequence belongs to the GcvP family. As to quaternary structure, the glycine cleavage system is composed of four proteins: P, T, L and H. Pyridoxal 5'-phosphate serves as cofactor.

The catalysed reaction is N(6)-[(R)-lipoyl]-L-lysyl-[glycine-cleavage complex H protein] + glycine + H(+) = N(6)-[(R)-S(8)-aminomethyldihydrolipoyl]-L-lysyl-[glycine-cleavage complex H protein] + CO2. In terms of biological role, the glycine cleavage system catalyzes the degradation of glycine. The P protein binds the alpha-amino group of glycine through its pyridoxal phosphate cofactor; CO(2) is released and the remaining methylamine moiety is then transferred to the lipoamide cofactor of the H protein. The polypeptide is Glycine dehydrogenase (decarboxylating) (Brucella melitensis biotype 2 (strain ATCC 23457)).